The following is a 121-amino-acid chain: Large ribosomal subunit protein uL14 (121 aa).

The protein belongs to the universal ribosomal protein uL14 family. In terms of assembly, part of the 50S ribosomal subunit. Forms a cluster with proteins L3 and L19. In the 70S ribosome, L14 and L19 interact and together make contacts with the 16S rRNA in bridges B5 and B8.

In terms of biological role, binds to 23S rRNA. Forms part of two intersubunit bridges in the 70S ribosome. This chain is Large ribosomal subunit protein uL14, found in Parasynechococcus marenigrum (strain WH8102).